The following is a 91-amino-acid chain: Large ribosomal subunit protein bL27 (91 aa).

Residues 1-25 (MAHKKGAASSNNGRDSESKRLGVKR) are disordered.

Belongs to the bacterial ribosomal protein bL27 family.

This chain is Large ribosomal subunit protein bL27, found in Corynebacterium kroppenstedtii (strain DSM 44385 / JCM 11950 / CIP 105744 / CCUG 35717).